The chain runs to 383 residues: ATP phosphoribosyltransferase regulatory subunit (383 aa).

The protein belongs to the class-II aminoacyl-tRNA synthetase family. HisZ subfamily. In terms of assembly, heteromultimer composed of HisG and HisZ subunits.

It is found in the cytoplasm. It participates in amino-acid biosynthesis; L-histidine biosynthesis; L-histidine from 5-phospho-alpha-D-ribose 1-diphosphate: step 1/9. Required for the first step of histidine biosynthesis. May allow the feedback regulation of ATP phosphoribosyltransferase activity by histidine. This chain is ATP phosphoribosyltransferase regulatory subunit, found in Cupriavidus metallidurans (strain ATCC 43123 / DSM 2839 / NBRC 102507 / CH34) (Ralstonia metallidurans).